Consider the following 300-residue polypeptide: Type II methyltransferase M.Cfr9I (300 aa).

The segment at arginine 109–threonine 129 is disordered.

The protein belongs to the N(4)/N(6)-methyltransferase family. N(4) subfamily.

It carries out the reaction a 2'-deoxycytidine in DNA + S-adenosyl-L-methionine = an N(4)-methyl-2'-deoxycytidine in DNA + S-adenosyl-L-homocysteine + H(+). In terms of biological role, a beta subtype methylase, recognizes the double-stranded sequence 5'-CCCGGG-3', methylates C-2 on both strands, and protects the DNA from cleavage by the Cfr9I endonuclease. In Citrobacter freundii, this protein is Type II methyltransferase M.Cfr9I.